The sequence spans 512 residues: Sorting nexin MVP1 (512 aa).

The disordered stretch occupies residues 1–24 (MDLEADPWRVNSEENGNNISGSVW). Residues 13–22 (EENGNNISGS) show a composition bias toward low complexity. A PX domain is found at 130–248 (AEDIVSVEEI…LTFLTVPTDL (119 aa)). The a 1,2-diacyl-sn-glycero-3-phospho-(1D-myo-inositol-3-phosphate) site is built by R174, S176, K200, and R215.

This sequence belongs to the sorting nexin family.

Its subcellular location is the cytoplasm. It localises to the membrane. Required for vacuolar protein sorting. The sequence is that of Sorting nexin MVP1 (MVP1) from Kluyveromyces lactis (strain ATCC 8585 / CBS 2359 / DSM 70799 / NBRC 1267 / NRRL Y-1140 / WM37) (Yeast).